The chain runs to 665 residues: DNA mismatch repair protein MutL (665 aa).

This sequence belongs to the DNA mismatch repair MutL/HexB family.

Its function is as follows. This protein is involved in the repair of mismatches in DNA. It is required for dam-dependent methyl-directed DNA mismatch repair. May act as a 'molecular matchmaker', a protein that promotes the formation of a stable complex between two or more DNA-binding proteins in an ATP-dependent manner without itself being part of a final effector complex. In Acidobacterium capsulatum (strain ATCC 51196 / DSM 11244 / BCRC 80197 / JCM 7670 / NBRC 15755 / NCIMB 13165 / 161), this protein is DNA mismatch repair protein MutL.